Here is a 713-residue protein sequence, read N- to C-terminus: Polyribonucleotide nucleotidyltransferase (713 aa).

Mg(2+) is bound by residues Asp487 and Asp493. A KH domain is found at 554–613 (PRIEVMNIPVDKIREVIGSGGKVIREIVEKTGAKINIEDDGTVKIASASGKEIEAARKWI). The 69-residue stretch at 623-691 (GQIYEGTVVK…ERGKVRLSMK (69 aa)) folds into the S1 motif domain.

The protein belongs to the polyribonucleotide nucleotidyltransferase family. Requires Mg(2+) as cofactor.

The protein localises to the cytoplasm. It catalyses the reaction RNA(n+1) + phosphate = RNA(n) + a ribonucleoside 5'-diphosphate. Involved in mRNA degradation. Catalyzes the phosphorolysis of single-stranded polyribonucleotides processively in the 3'- to 5'-direction. The protein is Polyribonucleotide nucleotidyltransferase of Agrobacterium fabrum (strain C58 / ATCC 33970) (Agrobacterium tumefaciens (strain C58)).